The primary structure comprises 233 residues: Uridylate kinase (233 aa).

9-10 (GS) serves as a coordination point for ATP. Gly-43 is a UMP binding site. ATP-binding residues include Gly-44 and Arg-48. UMP contacts are provided by residues Asp-65 and 113 to 119 (VTPGQTT). ATP is bound by residues Thr-139, Tyr-145, and Asp-148.

It belongs to the UMP kinase family. In terms of assembly, homohexamer.

Its subcellular location is the cytoplasm. It catalyses the reaction UMP + ATP = UDP + ADP. It functions in the pathway pyrimidine metabolism; CTP biosynthesis via de novo pathway; UDP from UMP (UMPK route): step 1/1. Its activity is regulated as follows. Inhibited by UTP. In terms of biological role, catalyzes the reversible phosphorylation of UMP to UDP. The sequence is that of Uridylate kinase from Methanosarcina acetivorans (strain ATCC 35395 / DSM 2834 / JCM 12185 / C2A).